The chain runs to 185 residues: MEAAADGPAETQSPVEKDSPAKTQSPAQDTSIMSRNNADTGRVLALPEHKKKRKGNLPAESVKILRDWMYKHRFKAYPSEEEKQMLSEKTNLSLLRISNWFINARRRILPDMLQQRRNDPIIGHKTGKDAHATHLQSTEASVPAKSGPVVQTMYKACPCGPCQRARCQERSNQIRSRPLARSSPE.

Disordered stretches follow at residues 1–58 and 166–185; these read MEAA…GNLP and RCQERSNQIRSRPLARSSPE. Residues 21–39 show a composition bias toward polar residues; it reads AKTQSPAQDTSIMSRNNAD. Positions 48–111 form a DNA-binding region, homeobox; TALE-type; sequence EHKKKRKGNL…INARRRILPD (64 aa).

The protein belongs to the TALE/TGIF homeobox family. Specifically expressed in adult testis.

The protein resides in the nucleus. Its function is as follows. May have a transcription role in testis. May act as a competitor/regulator of TGIF2LX. In Homo sapiens (Human), this protein is Homeobox protein TGIF2LY (TGIF2LY).